Here is a 33-residue protein sequence, read N- to C-terminus: Photosystem II reaction center protein T (33 aa).

A helical transmembrane segment spans residues 3–23 (ALVYTFLLVSTLGIIFFAIFF).

This sequence belongs to the PsbT family. In terms of assembly, PSII is composed of 1 copy each of membrane proteins PsbA, PsbB, PsbC, PsbD, PsbE, PsbF, PsbH, PsbI, PsbJ, PsbK, PsbL, PsbM, PsbT, PsbY, PsbZ, Psb30/Ycf12, at least 3 peripheral proteins of the oxygen-evolving complex and a large number of cofactors. It forms dimeric complexes.

It is found in the plastid. Its subcellular location is the chloroplast thylakoid membrane. Its function is as follows. Found at the monomer-monomer interface of the photosystem II (PS II) dimer, plays a role in assembly and dimerization of PSII. PSII is a light-driven water plastoquinone oxidoreductase, using light energy to abstract electrons from H(2)O, generating a proton gradient subsequently used for ATP formation. The chain is Photosystem II reaction center protein T from Arabidopsis thaliana (Mouse-ear cress).